We begin with the raw amino-acid sequence, 125 residues long: Small ribosomal subunit protein uS11 (125 aa).

Residues 101-125 form a disordered region; sequence KDVKDVTPTPHNGTRPPKKILKREK. A compositionally biased stretch (basic residues) spans 116–125; the sequence is PPKKILKREK.

It belongs to the universal ribosomal protein uS11 family. Part of the 30S ribosomal subunit. Interacts with proteins S7 and S18. Binds to IF-3.

Functionally, located on the platform of the 30S subunit, it bridges several disparate RNA helices of the 16S rRNA. Forms part of the Shine-Dalgarno cleft in the 70S ribosome. In Mycoplasma sp, this protein is Small ribosomal subunit protein uS11.